The following is a 232-amino-acid chain: Fibrillarin-like rRNA/tRNA 2'-O-methyltransferase (232 aa).

Residues 87-88 (TT), 105-106 (EF), 130-131 (DA), and 150-153 (DVAQ) each bind S-adenosyl-L-methionine.

This sequence belongs to the methyltransferase superfamily. Fibrillarin family. As to quaternary structure, interacts with nop5. Component of box C/D small ribonucleoprotein (sRNP) particles that contain rpl7ae, FlpA and nop5, plus a guide RNA.

Involved in pre-rRNA and tRNA processing. Utilizes the methyl donor S-adenosyl-L-methionine to catalyze the site-specific 2'-hydroxyl methylation of ribose moieties in rRNA and tRNA. Site specificity is provided by a guide RNA that base pairs with the substrate. Methylation occurs at a characteristic distance from the sequence involved in base pairing with the guide RNA. The sequence is that of Fibrillarin-like rRNA/tRNA 2'-O-methyltransferase from Methanococcus maripaludis (strain C7 / ATCC BAA-1331).